The chain runs to 356 residues: Dihydroorotate dehydrogenase (quinone) (356 aa).

Residues 67-71 and threonine 91 each bind FMN; that span reads PGFDK. Lysine 71 lines the substrate pocket. A substrate-binding site is contributed by 116–120; that stretch reads NRMGF. Asparagine 147 and asparagine 178 together coordinate FMN. Asparagine 178 is a binding site for substrate. Catalysis depends on serine 181, which acts as the Nucleophile. Asparagine 183 contacts substrate. Residues lysine 218 and serine 246 each contribute to the FMN site. 247–248 serves as a coordination point for substrate; it reads NT. FMN-binding positions include glycine 268, glycine 297, and 318–319; that span reads YS.

The protein belongs to the dihydroorotate dehydrogenase family. Type 2 subfamily. As to quaternary structure, monomer. FMN is required as a cofactor.

The protein localises to the cell membrane. It carries out the reaction (S)-dihydroorotate + a quinone = orotate + a quinol. The protein operates within pyrimidine metabolism; UMP biosynthesis via de novo pathway; orotate from (S)-dihydroorotate (quinone route): step 1/1. Functionally, catalyzes the conversion of dihydroorotate to orotate with quinone as electron acceptor. The chain is Dihydroorotate dehydrogenase (quinone) from Sphingopyxis alaskensis (strain DSM 13593 / LMG 18877 / RB2256) (Sphingomonas alaskensis).